Here is a 96-residue protein sequence, read N- to C-terminus: Co-chaperonin GroES (96 aa).

The protein belongs to the GroES chaperonin family. In terms of assembly, heptamer of 7 subunits arranged in a ring. Interacts with the chaperonin GroEL.

Its subcellular location is the cytoplasm. In terms of biological role, together with the chaperonin GroEL, plays an essential role in assisting protein folding. The GroEL-GroES system forms a nano-cage that allows encapsulation of the non-native substrate proteins and provides a physical environment optimized to promote and accelerate protein folding. GroES binds to the apical surface of the GroEL ring, thereby capping the opening of the GroEL channel. The polypeptide is Co-chaperonin GroES (Thiobacillus denitrificans (strain ATCC 25259 / T1)).